The sequence spans 379 residues: Dual-specificity RNA methyltransferase RlmN (379 aa).

The active-site Proton acceptor is the Glu-90. One can recognise a Radical SAM core domain in the interval 96 to 348; the sequence is EPSRGTLCVS…TTVRKTRGDD (253 aa). An intrachain disulfide couples Cys-103 to Cys-353. The [4Fe-4S] cluster site is built by Cys-110, Cys-114, and Cys-117. Residues 179–180, Ser-211, 233–235, and Asn-310 each bind S-adenosyl-L-methionine; these read GE and SLH. The active-site S-methylcysteine intermediate is Cys-353.

This sequence belongs to the radical SAM superfamily. RlmN family. Requires [4Fe-4S] cluster as cofactor.

It is found in the cytoplasm. The enzyme catalyses adenosine(2503) in 23S rRNA + 2 reduced [2Fe-2S]-[ferredoxin] + 2 S-adenosyl-L-methionine = 2-methyladenosine(2503) in 23S rRNA + 5'-deoxyadenosine + L-methionine + 2 oxidized [2Fe-2S]-[ferredoxin] + S-adenosyl-L-homocysteine. It carries out the reaction adenosine(37) in tRNA + 2 reduced [2Fe-2S]-[ferredoxin] + 2 S-adenosyl-L-methionine = 2-methyladenosine(37) in tRNA + 5'-deoxyadenosine + L-methionine + 2 oxidized [2Fe-2S]-[ferredoxin] + S-adenosyl-L-homocysteine. Functionally, specifically methylates position 2 of adenine 2503 in 23S rRNA and position 2 of adenine 37 in tRNAs. m2A2503 modification seems to play a crucial role in the proofreading step occurring at the peptidyl transferase center and thus would serve to optimize ribosomal fidelity. The protein is Dual-specificity RNA methyltransferase RlmN of Nitrosomonas europaea (strain ATCC 19718 / CIP 103999 / KCTC 2705 / NBRC 14298).